The sequence spans 55 residues: ATP synthase F(0) complex subunit 8 (55 aa).

The chain crosses the membrane as a helical span at residues 4–24 (LNPAPWFMIFMFTWAIFLTIL). Positions 34–55 (PNEPSPQGMTTPKTAPWNWPWH) are disordered.

This sequence belongs to the ATPase protein 8 family. As to quaternary structure, component of the ATP synthase complex composed at least of ATP5F1A/subunit alpha, ATP5F1B/subunit beta, ATP5MC1/subunit c (homooctomer), MT-ATP6/subunit a, MT-ATP8/subunit 8, ATP5ME/subunit e, ATP5MF/subunit f, ATP5MG/subunit g, ATP5MK/subunit k, ATP5MJ/subunit j, ATP5F1C/subunit gamma, ATP5F1D/subunit delta, ATP5F1E/subunit epsilon, ATP5PF/subunit F6, ATP5PB/subunit b, ATP5PD/subunit d, ATP5PO/subunit OSCP. ATP synthase complex consists of a soluble F(1) head domain (subunits alpha(3) and beta(3)) - the catalytic core - and a membrane F(0) domain - the membrane proton channel (subunits c, a, 8, e, f, g, k and j). These two domains are linked by a central stalk (subunits gamma, delta, and epsilon) rotating inside the F1 region and a stationary peripheral stalk (subunits F6, b, d, and OSCP).

The protein localises to the mitochondrion membrane. In terms of biological role, subunit 8, of the mitochondrial membrane ATP synthase complex (F(1)F(0) ATP synthase or Complex V) that produces ATP from ADP in the presence of a proton gradient across the membrane which is generated by electron transport complexes of the respiratory chain. ATP synthase complex consist of a soluble F(1) head domain - the catalytic core - and a membrane F(1) domain - the membrane proton channel. These two domains are linked by a central stalk rotating inside the F(1) region and a stationary peripheral stalk. During catalysis, ATP synthesis in the catalytic domain of F(1) is coupled via a rotary mechanism of the central stalk subunits to proton translocation. In vivo, can only synthesize ATP although its ATP hydrolase activity can be activated artificially in vitro. Part of the complex F(0) domain. The sequence is that of ATP synthase F(0) complex subunit 8 from Gadus morhua (Atlantic cod).